Consider the following 424-residue polypeptide: Tyrosine--tRNA ligase (424 aa).

L-tyrosine is bound at residue Tyr-37. Residues 42–51 (PTADSLHLGH) carry the 'HIGH' region motif. Lys-144 bears the N6-acetyllysine mark. L-tyrosine is bound by residues Tyr-175 and Gln-179. The 'KMSKS' region motif lies at 235 to 239 (KFGKT). Residue Lys-238 coordinates ATP. The region spanning 357 to 414 (ADLMQALVDSELQPSRGQARKTIASNAITINGEKQSDPEYFFKEEDRLFGRFTLLRRG) is the S4 RNA-binding domain.

This sequence belongs to the class-I aminoacyl-tRNA synthetase family. TyrS type 1 subfamily. As to quaternary structure, homodimer.

The protein resides in the cytoplasm. The enzyme catalyses tRNA(Tyr) + L-tyrosine + ATP = L-tyrosyl-tRNA(Tyr) + AMP + diphosphate + H(+). Its function is as follows. Catalyzes the attachment of tyrosine to tRNA(Tyr) in a two-step reaction: tyrosine is first activated by ATP to form Tyr-AMP and then transferred to the acceptor end of tRNA(Tyr). This Shigella flexneri serotype 5b (strain 8401) protein is Tyrosine--tRNA ligase.